We begin with the raw amino-acid sequence, 313 residues long: Malate dehydrogenase (313 aa).

Residues 11 to 16 (GAGNIG) and Asp35 each bind NAD(+). Residues Arg84 and Arg90 each coordinate substrate. NAD(+)-binding positions include Asn97 and 120-122 (VTN). Residues Asn122 and Arg153 each coordinate substrate. Catalysis depends on His177, which acts as the Proton acceptor.

Belongs to the LDH/MDH superfamily. MDH type 3 family.

It carries out the reaction (S)-malate + NAD(+) = oxaloacetate + NADH + H(+). Catalyzes the reversible oxidation of malate to oxaloacetate. In Ehrlichia canis (strain Jake), this protein is Malate dehydrogenase.